The sequence spans 163 residues: Lipoprotein signal peptidase (163 aa).

The next 3 membrane-spanning stretches (helical) occupy residues 8–28 (FFLL…YWVM), 61–81 (FSHW…LWLW), and 93–113 (FGFT…ICFY). Catalysis depends on residues D117 and D136. The chain crosses the membrane as a helical span at residues 128–148 (YFAVFNLADTFITLGVIAIII).

The protein belongs to the peptidase A8 family.

The protein localises to the cell inner membrane. It carries out the reaction Release of signal peptides from bacterial membrane prolipoproteins. Hydrolyzes -Xaa-Yaa-Zaa-|-(S,diacylglyceryl)Cys-, in which Xaa is hydrophobic (preferably Leu), and Yaa (Ala or Ser) and Zaa (Gly or Ala) have small, neutral side chains.. The protein operates within protein modification; lipoprotein biosynthesis (signal peptide cleavage). Functionally, this protein specifically catalyzes the removal of signal peptides from prolipoproteins. This chain is Lipoprotein signal peptidase, found in Bartonella henselae (strain ATCC 49882 / DSM 28221 / CCUG 30454 / Houston 1) (Rochalimaea henselae).